Consider the following 160-residue polypeptide: General odorant-binding protein 2 (160 aa).

The first 19 residues, 1–19, serve as a signal peptide directing secretion; it reads MGYKLLLMYIAIVIDSVIG. Disulfide bonds link cysteine 38–cysteine 73, cysteine 69–cysteine 127, and cysteine 116–cysteine 136.

It belongs to the PBP/GOBP family. In terms of tissue distribution, antenna.

Present in the aqueous fluid surrounding olfactory sensory dendrites and are thought to aid in the capture and transport of hydrophobic odorants into and through this fluid. This Antheraea pernyi (Chinese oak silk moth) protein is General odorant-binding protein 2.